Consider the following 154-residue polypeptide: Transcription antitermination protein NusB (154 aa).

The protein belongs to the NusB family.

Its function is as follows. Involved in transcription antitermination. Required for transcription of ribosomal RNA (rRNA) genes. Binds specifically to the boxA antiterminator sequence of the ribosomal RNA (rrn) operons. The sequence is that of Transcription antitermination protein NusB from Rickettsia typhi (strain ATCC VR-144 / Wilmington).